Consider the following 166-residue polypeptide: MTVPEEAQTLIGKHYRAPDHFLVGREKIREFAVAVKDDHPTHYSEPDAAAAGYPALVAPLTFLAIAGRRVQLEIFTKFNIPINIARVFHRDQKFRFHRPILANDKLYFDTYLDSVIESHGTVLAEIRSEVTDAEGKPVVTSVVTMLGEAAHHEADADATVAAIASI.

Positions 8 to 131 constitute a MaoC-like domain; sequence QTLIGKHYRA…VLAEIRSEVT (124 aa).

It belongs to the UPF0336 family.

The polypeptide is UPF0336 protein MT0525.1 (Mycobacterium tuberculosis (strain CDC 1551 / Oshkosh)).